Consider the following 749-residue polypeptide: Activating signal cointegrator 1 complex subunit 2 (749 aa).

A disordered region spans residues 1–26 (MPALPLDQLQITHKDPKTGQPKTSAA). Residue threonine 233 is modified to Phosphothreonine. The CUE domain occupies 465-508 (ELDSLISQVKDLLPDLGEGFILACLEHYSYDSEQVINNILEDRL). Disordered stretches follow at residues 606–675 (EDEY…QDPA) and 689–749 (LARK…MIPS). Serine 625 is subject to Phosphoserine. The span at 649–662 (VQEEEWDEEDEVEE) shows a compositional bias: acidic residues. 2 stretches are compositionally biased toward basic and acidic residues: residues 663–675 (EAPKPDHFIQDPA) and 711–726 (QSRETTQERRKKEANK).

This sequence belongs to the ASCC2 family. Identified in the ASCC complex that contains ASCC1, ASCC2 and ASCC3. Interacts directly with ASCC3. The ASCC complex interacts with ALKBH3. Interacts (via CUE domain) with 'Lys-63'-linked polyubiquitin chains, but not with 'Lys-48'-linked polyubiquitin chains. Part of the ASC-1 complex, that contains TRIP4, ASCC1, ASCC2 and ASCC3. Component of the RQT (ribosome quality control trigger) complex, that contains ASCC2, ASCC3 and TRIP4. Interacts with CSRP1. Interacts with PRPF8, a component of the spliceosome. Interacts with ZCCHC4.

The protein resides in the nucleus. Its subcellular location is the nucleus speckle. Ubiquitin-binding protein involved in DNA repair and rescue of stalled ribosomes. Plays a role in DNA damage repair as component of the ASCC complex. Recruits ASCC3 and ALKBH3 to sites of DNA damage by binding to polyubiquitinated proteins that have 'Lys-63'-linked polyubiquitin chains. Part of the ASC-1 complex that enhances NF-kappa-B, SRF and AP1 transactivation. Involved in activation of the ribosome quality control (RQC) pathway, a pathway that degrades nascent peptide chains during problematic translation. Specifically recognizes and binds RPS20/uS10 ubiquitinated by ZNF598, promoting recruitment of the RQT (ribosome quality control trigger) complex on stalled ribosomes, followed by disassembly of stalled ribosomes. In Mus musculus (Mouse), this protein is Activating signal cointegrator 1 complex subunit 2 (Ascc2).